The chain runs to 103 residues: Large ribosomal subunit protein bL21 (103 aa).

This sequence belongs to the bacterial ribosomal protein bL21 family. In terms of assembly, part of the 50S ribosomal subunit. Contacts protein L20.

In terms of biological role, this protein binds to 23S rRNA in the presence of protein L20. This Azoarcus sp. (strain BH72) protein is Large ribosomal subunit protein bL21.